We begin with the raw amino-acid sequence, 547 residues long: Sensor histidine kinase CitA (547 aa).

Residues methionine 1–arginine 23 lie on the Cytoplasmic side of the membrane. A helical transmembrane segment spans residues isoleucine 24–threonine 44. Topologically, residues aspartate 45–serine 180 are periplasmic. Citrate is bound by residues arginine 109, histidine 112, arginine 150, and lysine 152. Residues leucine 181 to alanine 201 form a helical membrane-spanning segment. Over arginine 202–glycine 547 the chain is Cytoplasmic. The PAS domain occupies isoleucine 225–glutamate 264. The Histidine kinase domain maps to alanine 347–arginine 542. A Phosphohistidine; by autocatalysis modification is found at histidine 350.

As to quaternary structure, homodimer. In vitro CitB and the CitA kinase domain form a complex, formation of which is enhanced by ATP. Post-translationally, autophosphorylated.

The protein localises to the cell inner membrane. The enzyme catalyses ATP + protein L-histidine = ADP + protein N-phospho-L-histidine.. Functionally, member of the two-component regulatory system CitA/CitB. Probably activates CitB by phosphorylation. The periplasmic domain binds H-citrate(2-), which is essential for induction of the citrate-fermentation genes. This Klebsiella pneumoniae protein is Sensor histidine kinase CitA (citA).